The chain runs to 221 residues: Ribonuclease 3 (221 aa).

The region spanning 1–123 (MERTGHAFAD…LIAVLYLDGG (123 aa)) is the RNase III domain. Glutamate 36 is a Mg(2+) binding site. Residue aspartate 40 is part of the active site. Residues aspartate 109 and glutamate 112 each coordinate Mg(2+). The active site involves glutamate 112. Residues 148–217 (DAKTELQEWA…AAALLLREGV (70 aa)) form the DRBM domain.

The protein belongs to the ribonuclease III family. Homodimer. It depends on Mg(2+) as a cofactor.

Its subcellular location is the cytoplasm. It catalyses the reaction Endonucleolytic cleavage to 5'-phosphomonoester.. Digests double-stranded RNA. Involved in the processing of primary rRNA transcript to yield the immediate precursors to the large and small rRNAs (23S and 16S). Processes some mRNAs, and tRNAs when they are encoded in the rRNA operon. Processes pre-crRNA and tracrRNA of type II CRISPR loci if present in the organism. This is Ribonuclease 3 from Mesorhizobium japonicum (strain LMG 29417 / CECT 9101 / MAFF 303099) (Mesorhizobium loti (strain MAFF 303099)).